Here is a 139-residue protein sequence, read N- to C-terminus: Mitochondrial intermembrane space import and assembly protein 40 (139 aa).

3 disulfides stabilise this stretch: cysteine 53/cysteine 55, cysteine 64/cysteine 97, and cysteine 74/cysteine 87. The CHCH domain maps to 61 to 105 (SGPCGEQFKSAFSCFHYSTEDIKGSDCIDQFRAMQECMQKYPDLY). Short sequence motifs (cx9C motif) lie at residues 64–74 (CGEQFKSAFSC) and 87–97 (CIDQFRAMQEC). The segment at 102 to 139 (PDLYPQDEEEEEEAKPVEPVEETADTKVSAAKEQGTSS) is disordered. Over residues 106–124 (PQDEEEEEEAKPVEPVEET) the composition is skewed to acidic residues.

Monomer. Can form homooligomers. Interacts with GFER and forms transient disulfide bonds with GFER. Interacts with MICU1. Interacts with COX19 forming transient intermolecular disulfide bridges. Interacts with COA7 through transient intermolecular disulfide bonds. Interacts with AIFM1; the interaction increases in presence of NADH. Interacts with NDUFB10. Post-translationally, forms intrachain disulfide bridges, but exists in different redox states. As to expression, widely expressed. Present at high level in liver and kidney, followed by lung, brain, heart and spleen (at protein level).

The protein localises to the mitochondrion intermembrane space. Functionally, central component of a redox-sensitive mitochondrial intermembrane space import machinery which is required for the biogenesis of respiratory chain complexes. Functions as chaperone and catalyzes the formation of disulfide bonds in substrate proteins, such as COX17, COX19, MICU1 and COA7. Required for the import and folding of small cysteine-containing proteins (small Tim) in the mitochondrial intermembrane space (IMS). Required for the import of COA7 in the IMS. Precursor proteins to be imported into the IMS are translocated in their reduced form into the mitochondria. The oxidized form of CHCHD4/MIA40 forms a transient intermolecular disulfide bridge with the reduced precursor protein, resulting in oxidation of the precursor protein that now contains an intramolecular disulfide bond and is able to undergo folding in the IMS. Reduced CHCHD4/MIA40 is then reoxidized by GFER/ERV1 via a disulfide relay system. Mediates formation of disulfide bond in MICU1 in the IMS, promoting formation of the MICU1-MICU2 heterodimer that regulates mitochondrial calcium uptake. This chain is Mitochondrial intermembrane space import and assembly protein 40 (Chchd4), found in Mus musculus (Mouse).